Reading from the N-terminus, the 310-residue chain is Methionyl-tRNA formyltransferase (310 aa).

Residue 108-111 participates in (6S)-5,6,7,8-tetrahydrofolate binding; that stretch reads SLLP.

This sequence belongs to the Fmt family.

It catalyses the reaction L-methionyl-tRNA(fMet) + (6R)-10-formyltetrahydrofolate = N-formyl-L-methionyl-tRNA(fMet) + (6S)-5,6,7,8-tetrahydrofolate + H(+). Attaches a formyl group to the free amino group of methionyl-tRNA(fMet). The formyl group appears to play a dual role in the initiator identity of N-formylmethionyl-tRNA by promoting its recognition by IF2 and preventing the misappropriation of this tRNA by the elongation apparatus. The sequence is that of Methionyl-tRNA formyltransferase from Fusobacterium nucleatum subsp. nucleatum (strain ATCC 25586 / DSM 15643 / BCRC 10681 / CIP 101130 / JCM 8532 / KCTC 2640 / LMG 13131 / VPI 4355).